The following is a 257-amino-acid chain: UPF0246 protein Shal_1126 (257 aa).

This sequence belongs to the UPF0246 family.

This Shewanella halifaxensis (strain HAW-EB4) protein is UPF0246 protein Shal_1126.